The chain runs to 1411 residues: Regulating synaptic membrane exocytosis protein 2 (1411 aa).

A disordered region spans residues 1–33 (MSAPVGPRGRLAPIPAASQPPLQPEMPDLSHLT). Residues 26–185 (MPDLSHLTEE…TKSGAWFYNS (160 aa)) enclose the RabBD domain. The segment at 117 to 173 (KGDAPTCGICHKTKFADGCGHNCSYCQTKFCARCGGRVSLRSNKVMWVCNLCRKQQE) adopts an FYVE-type zinc-finger fold. 8 residues coordinate Zn(2+): Cys-123, Cys-126, Cys-139, Cys-142, Cys-147, Cys-150, Cys-165, and Cys-168. Basic and acidic residues-rich tracts occupy residues 203–216 (NEEA…KLHE), 273–287 (DQNR…REEY), 318–329 (DSDHLSYRDSNR), 348–366 (RDEY…RYRS), 382–401 (EQMR…RHSD), and 410–434 (EDSR…RRAA). 2 disordered regions span residues 203-598 (NEEA…SERQ) and 623-650 (SGVD…WQPS). Ser-400 bears the Phosphoserine mark. The span at 451–463 (GPSSYAQRTTNHS) shows a compositional bias: polar residues. The span at 475 to 492 (DRPDLRRTDSLRKQHHLD) shows a compositional bias: basic and acidic residues. The segment covering 510 to 521 (RNDSLSSDQSES) has biased composition (polar residues). Positions 528 to 537 (KPHKSKKGGK) are enriched in basic residues. Acidic residues predominate over residues 558–568 (SCDDVEIESES). Composition is skewed to basic and acidic residues over residues 569 to 583 (VSEK…RKTS) and 634 to 644 (NEEHSHSDKHP). One can recognise a PDZ domain in the interval 668-754 (DGSVPRDSGA…EPQVELVVSR (87 aa)). Thr-689 bears the Phosphothreonine mark. A disordered region spans residues 762–793 (IPDSTHAQLESSSSSFESQKMDRPSISVTSPM). Ser-791 and Ser-794 each carry phosphoserine. A C2 1 domain is found at 805 to 928 (LSGQLSIKLW…ALLDDEPHWY (124 aa)). Disordered stretches follow at residues 939–973 (PLPH…SEVS) and 993–1190 (DLQS…STET). Composition is skewed to polar residues over residues 994-1015 (LQSS…SPSG) and 1049-1059 (RTMTGHYNTIS). Residues 1060 to 1113 (RMDRHRVMDDHYSPDRDRDCEAADRQPYHRSRSTEQRPLLERTTTRSRSTERPD) show a composition bias toward basic and acidic residues. Residues 1143–1153 (GSVQTSPSSTP) show a composition bias toward polar residues. Ser-1148 is subject to Phosphoserine. The C2 2 domain maps to 1257–1375 (AMGDIQVGMM…ELSNMVIGWF (119 aa)). A phosphoserine mark is found at Ser-1396 and Ser-1399.

Interacts with RAB3A and RAB3B that have been activated by GTP-binding. Interacts with RAB3C, RAB3D and RAB26. Interacts with TSPOAP1 and RIMBP2. Interacts with PPFIA3 and PPFIA4. Interacts via its zinc finger with the first C2 domain of UNC13A. Forms a complex consisting of UNC13A, RIMS2 and RAB3A. Heterodimer with PCLO. Part of a ternary complex involving PCLO and EPAC2. As to expression, widely expressed. Expressed in melanocytes. In fetal tissues, predominantly expressed in the brain. In the retina, expressed in the outer plexiform layer (at protein level). In the cerebellum, expressed in Purkinje cells (at protein level). In the pancreas, expressed in Langerhans islets (at protein level).

The protein resides in the cell membrane. It localises to the synapse. The protein localises to the presynaptic cell membrane. Its function is as follows. Rab effector involved in exocytosis. May act as scaffold protein. Plays a role in dendrite formation by melanocytes. This chain is Regulating synaptic membrane exocytosis protein 2 (RIMS2), found in Homo sapiens (Human).